The primary structure comprises 927 residues: Nonsense-mediated mRNA decay factor SMG8 (927 aa).

Disordered regions lie at residues Asn543 to Ser581, Gln611 to Asn636, and Gln643 to Thr662. Residues Gln551 to Gln566 show a composition bias toward acidic residues. A compositionally biased stretch (polar residues) spans Arg613–Asp633. Residues Glu644–Val654 show a composition bias toward basic and acidic residues.

Belongs to the SMG8 family.

In terms of biological role, involved in nonsense-mediated decay (NMD) of mRNAs containing premature stop codons. Probable component of kinase complex containing nonC and recruited to stalled ribosomes. The protein is Nonsense-mediated mRNA decay factor SMG8 of Drosophila sechellia (Fruit fly).